Here is a 357-residue protein sequence, read N- to C-terminus: UPF0283 membrane protein BSUIS_A1077 (357 aa).

A disordered region spans residues Met-1–Lys-36. The span at Glu-27 to Lys-36 shows a compositional bias: basic and acidic residues. 2 consecutive transmembrane segments (helical) span residues Ile-78–Leu-98 and Leu-109–Leu-129.

This sequence belongs to the UPF0283 family.

It is found in the cell inner membrane. This chain is UPF0283 membrane protein BSUIS_A1077, found in Brucella suis (strain ATCC 23445 / NCTC 10510).